The sequence spans 473 residues: Bactericidal permeability-increasing protein (473 aa).

The N-terminal stretch at methionine 1–serine 18 is a signal peptide. The segment at isoleucine 19–glycine 29 is central sheet, part 1. Residues threonine 28 to leucine 209 are N-terminal barrel. An intrachain disulfide couples cysteine 153 to cysteine 192. The central sheet, part 2 stretch occupies residues valine 211–serine 275. Residues methionine 225–threonine 230 are cleavage sites for elastase. The segment at alanine 276–leucine 446 is C-terminal barrel. A glycan (N-linked (GlcNAc...) asparagine) is linked at asparagine 365. A central sheet, part 3 region spans residues asparagine 453 to threonine 472.

The protein belongs to the BPI/LBP/Plunc superfamily. BPI/LBP family. Monomer. Homodimer; disulfide-linked. Expressed in spleen. Lower expression in gill, head kidney, entire kidney, skin, intestine and blood and lowest expression in liver and muscle.

Its subcellular location is the secreted. In terms of biological role, the cytotoxic action of BPI is limited to many species of Gram-negative bacteria; this specificity may be explained by a strong affinity of the very basic N-terminal half for the negatively charged lipopolysaccharides that are unique to the Gram-negative bacterial outer envelope. Exhibits neutralizing capacity towards P.aeruginosa lipopolysaccharides (LPS) and has bactericidal activity against multiple drug resistant (MDR) P.aeruginosa strains derived from people with cystic fibrosis. Has antibacterial activity against E.coli, but not against S.iniae. The polypeptide is Bactericidal permeability-increasing protein (Sebastes schlegelii (Korean rockfish)).